Reading from the N-terminus, the 362-residue chain is Biotin synthase (362 aa).

The Radical SAM core domain maps to N46–R273. [4Fe-4S] cluster is bound by residues C61, C65, and C68. [2Fe-2S] cluster contacts are provided by C105, C136, C196, and R268.

Belongs to the radical SAM superfamily. Biotin synthase family. As to quaternary structure, homodimer. The cofactor is [4Fe-4S] cluster. [2Fe-2S] cluster serves as cofactor.

The enzyme catalyses (4R,5S)-dethiobiotin + (sulfur carrier)-SH + 2 reduced [2Fe-2S]-[ferredoxin] + 2 S-adenosyl-L-methionine = (sulfur carrier)-H + biotin + 2 5'-deoxyadenosine + 2 L-methionine + 2 oxidized [2Fe-2S]-[ferredoxin]. It functions in the pathway cofactor biosynthesis; biotin biosynthesis; biotin from 7,8-diaminononanoate: step 2/2. In terms of biological role, catalyzes the conversion of dethiobiotin (DTB) to biotin by the insertion of a sulfur atom into dethiobiotin via a radical-based mechanism. The sequence is that of Biotin synthase from Aeromonas salmonicida (strain A449).